A 337-amino-acid chain; its full sequence is tRNA N6-adenosine threonylcarbamoyltransferase (337 aa).

2 residues coordinate Fe cation: His-111 and His-115. Substrate contacts are provided by residues 134–138, Asp-167, Gly-180, and Asn-272; that span reads LVSGG. Asp-300 contributes to the Fe cation binding site.

Belongs to the KAE1 / TsaD family. The cofactor is Fe(2+).

It is found in the cytoplasm. It carries out the reaction L-threonylcarbamoyladenylate + adenosine(37) in tRNA = N(6)-L-threonylcarbamoyladenosine(37) in tRNA + AMP + H(+). Functionally, required for the formation of a threonylcarbamoyl group on adenosine at position 37 (t(6)A37) in tRNAs that read codons beginning with adenine. Is involved in the transfer of the threonylcarbamoyl moiety of threonylcarbamoyl-AMP (TC-AMP) to the N6 group of A37, together with TsaE and TsaB. TsaD likely plays a direct catalytic role in this reaction. The chain is tRNA N6-adenosine threonylcarbamoyltransferase from Salmonella choleraesuis (strain SC-B67).